A 146-amino-acid chain; its full sequence is Transcriptional regulator MraZ (146 aa).

2 consecutive SpoVT-AbrB domains span residues 7 to 54 (HVTN…GPEL) and 83 to 126 (GVYV…DPQA).

It belongs to the MraZ family. As to quaternary structure, forms oligomers.

It localises to the cytoplasm. The protein localises to the nucleoid. The sequence is that of Transcriptional regulator MraZ from Rhizobium meliloti (strain 1021) (Ensifer meliloti).